The chain runs to 179 residues: ATP synthase subunit delta (179 aa).

It belongs to the ATPase delta chain family. In terms of assembly, F-type ATPases have 2 components, F(1) - the catalytic core - and F(0) - the membrane proton channel. F(1) has five subunits: alpha(3), beta(3), gamma(1), delta(1), epsilon(1). F(0) has three main subunits: a(1), b(2) and c(10-14). The alpha and beta chains form an alternating ring which encloses part of the gamma chain. F(1) is attached to F(0) by a central stalk formed by the gamma and epsilon chains, while a peripheral stalk is formed by the delta and b chains.

The protein resides in the cell inner membrane. F(1)F(0) ATP synthase produces ATP from ADP in the presence of a proton or sodium gradient. F-type ATPases consist of two structural domains, F(1) containing the extramembraneous catalytic core and F(0) containing the membrane proton channel, linked together by a central stalk and a peripheral stalk. During catalysis, ATP synthesis in the catalytic domain of F(1) is coupled via a rotary mechanism of the central stalk subunits to proton translocation. In terms of biological role, this protein is part of the stalk that links CF(0) to CF(1). It either transmits conformational changes from CF(0) to CF(1) or is implicated in proton conduction. The polypeptide is ATP synthase subunit delta (Burkholderia lata (strain ATCC 17760 / DSM 23089 / LMG 22485 / NCIMB 9086 / R18194 / 383)).